A 468-amino-acid chain; its full sequence is UDP-glycosyltransferase 89B2 (468 aa).

Residues S287, 347–348 (WV), 365–373 (HCGWNSVME), and 387–390 (SADQ) contribute to the UDP-alpha-D-glucose site.

The protein belongs to the UDP-glycosyltransferase family.

Its function is as follows. May glycosylate diterpenes or flavonols in leaves. This chain is UDP-glycosyltransferase 89B2, found in Stevia rebaudiana (Stevia).